We begin with the raw amino-acid sequence, 335 residues long: Ferrochelatase (335 aa).

Fe cation contacts are provided by H207 and E288.

It belongs to the ferrochelatase family.

It localises to the cytoplasm. It catalyses the reaction heme b + 2 H(+) = protoporphyrin IX + Fe(2+). It functions in the pathway porphyrin-containing compound metabolism; protoheme biosynthesis; protoheme from protoporphyrin-IX: step 1/1. Catalyzes the ferrous insertion into protoporphyrin IX. In Helicobacter pylori (strain J99 / ATCC 700824) (Campylobacter pylori J99), this protein is Ferrochelatase.